The chain runs to 1564 residues: Nucleoporin nup184 (1564 aa).

The protein resides in the nucleus. Its subcellular location is the nuclear pore complex. In terms of biological role, interacts with pom152 in the core structure of the nuclear pore complex (NPC). Involved in the export of mRNA. The sequence is that of Nucleoporin nup184 (nup184) from Schizosaccharomyces pombe (strain 972 / ATCC 24843) (Fission yeast).